A 133-amino-acid polypeptide reads, in one-letter code: uncharacterized protein (133 aa).

A DNA-binding region (recombinase) is located at residues 1 to 82; the sequence is MIDKIKKGYS…QKMLHDRQNF (82 aa).

This is an uncharacterized protein from Bacillus phage phi105 (Bacteriophage phi-105).